The sequence spans 121 residues: Large ribosomal subunit protein uL18 (121 aa).

This sequence belongs to the universal ribosomal protein uL18 family. As to quaternary structure, part of the 50S ribosomal subunit; part of the 5S rRNA/L5/L18/L25 subcomplex. Contacts the 5S and 23S rRNAs.

In terms of biological role, this is one of the proteins that bind and probably mediate the attachment of the 5S RNA into the large ribosomal subunit, where it forms part of the central protuberance. This Caldanaerobacter subterraneus subsp. tengcongensis (strain DSM 15242 / JCM 11007 / NBRC 100824 / MB4) (Thermoanaerobacter tengcongensis) protein is Large ribosomal subunit protein uL18.